A 126-amino-acid polypeptide reads, in one-letter code: Small ribosomal subunit protein uS13 (126 aa).

Positions 91 to 126 (HRAGLPVRGQRTRTNSRTRRSAKRTVAGKKKAPSKK) are disordered. A compositionally biased stretch (basic residues) spans 100–126 (QRTRTNSRTRRSAKRTVAGKKKAPSKK).

The protein belongs to the universal ribosomal protein uS13 family. Part of the 30S ribosomal subunit. Forms a loose heterodimer with protein S19. Forms two bridges to the 50S subunit in the 70S ribosome.

In terms of biological role, located at the top of the head of the 30S subunit, it contacts several helices of the 16S rRNA. In the 70S ribosome it contacts the 23S rRNA (bridge B1a) and protein L5 of the 50S subunit (bridge B1b), connecting the 2 subunits; these bridges are implicated in subunit movement. Contacts the tRNAs in the A and P-sites. This Acaryochloris marina (strain MBIC 11017) protein is Small ribosomal subunit protein uS13.